We begin with the raw amino-acid sequence, 148 residues long: Augurin (148 aa).

The signal sequence occupies residues 1-31 (MGTSSARPAVLALAGLALLLLLCLGPGDVSG). Propeptides lie at residues 32–68 (NKLK…LKRA) and 133–148 (SREG…YDDY).

The protein belongs to the augurin family. As to expression, expressed in the brain, with expression in the choroid plexus and the ventricular ependymal cells (at protein level).

It localises to the secreted. The protein resides in the cytoplasm. The protein localises to the apical cell membrane. Probable hormone that may attenuate cell proliferation and induce senescence of oligodendrocyte and neural precursor cells in the central nervous system. ECRG4-induced senescence is characterized by G1 arrest, RB1 dephosphorylation and accelerated CCND1 and CCND3 proteasomal degradation. The sequence is that of Augurin from Rattus norvegicus (Rat).